Here is a 415-residue protein sequence, read N- to C-terminus: Serine hydroxymethyltransferase (415 aa).

Residues L120 and 124 to 126 contribute to the (6S)-5,6,7,8-tetrahydrofolate site; that span reads GHL. At K229 the chain carries N6-(pyridoxal phosphate)lysine.

It belongs to the SHMT family. Homodimer. Pyridoxal 5'-phosphate serves as cofactor.

Its subcellular location is the cytoplasm. The catalysed reaction is (6R)-5,10-methylene-5,6,7,8-tetrahydrofolate + glycine + H2O = (6S)-5,6,7,8-tetrahydrofolate + L-serine. It functions in the pathway one-carbon metabolism; tetrahydrofolate interconversion. The protein operates within amino-acid biosynthesis; glycine biosynthesis; glycine from L-serine: step 1/1. In terms of biological role, catalyzes the reversible interconversion of serine and glycine with tetrahydrofolate (THF) serving as the one-carbon carrier. This reaction serves as the major source of one-carbon groups required for the biosynthesis of purines, thymidylate, methionine, and other important biomolecules. Also exhibits THF-independent aldolase activity toward beta-hydroxyamino acids, producing glycine and aldehydes, via a retro-aldol mechanism. This Desulforudis audaxviator (strain MP104C) protein is Serine hydroxymethyltransferase.